The chain runs to 429 residues: Adenylosuccinate synthetase (429 aa).

Residues 13-19 (GDEGKGK) and 41-43 (GHT) each bind GTP. Catalysis depends on D14, which acts as the Proton acceptor. Residues D14 and G41 each contribute to the Mg(2+) site. IMP-binding positions include 14 to 17 (DEGK), 39 to 42 (NAGH), T130, R144, Q225, T240, and R304. The Proton donor role is filled by H42. 300 to 306 (ATTGRAR) contributes to the substrate binding site. GTP is bound by residues R306, 332–334 (KLD), and 414–416 (STG).

Belongs to the adenylosuccinate synthetase family. As to quaternary structure, homodimer. The cofactor is Mg(2+).

The protein resides in the cytoplasm. The catalysed reaction is IMP + L-aspartate + GTP = N(6)-(1,2-dicarboxyethyl)-AMP + GDP + phosphate + 2 H(+). The protein operates within purine metabolism; AMP biosynthesis via de novo pathway; AMP from IMP: step 1/2. In terms of biological role, plays an important role in the de novo pathway of purine nucleotide biosynthesis. Catalyzes the first committed step in the biosynthesis of AMP from IMP. The sequence is that of Adenylosuccinate synthetase from Acidithiobacillus ferrooxidans (Thiobacillus ferrooxidans).